A 439-amino-acid polypeptide reads, in one-letter code: Ribosomal protein uS12 methylthiotransferase RimO (439 aa).

An MTTase N-terminal domain is found at 7-119 (KQLCLISLGC…IDIMIAKKQN (113 aa)). Positions 16, 50, 82, 151, 155, and 158 each coordinate [4Fe-4S] cluster. The region spanning 137 to 368 (TGSSVHAYVK…ALKHQNHSFK (232 aa)) is the Radical SAM core domain.

Belongs to the methylthiotransferase family. RimO subfamily. [4Fe-4S] cluster is required as a cofactor.

Its subcellular location is the cytoplasm. The catalysed reaction is L-aspartate(89)-[ribosomal protein uS12]-hydrogen + (sulfur carrier)-SH + AH2 + 2 S-adenosyl-L-methionine = 3-methylsulfanyl-L-aspartate(89)-[ribosomal protein uS12]-hydrogen + (sulfur carrier)-H + 5'-deoxyadenosine + L-methionine + A + S-adenosyl-L-homocysteine + 2 H(+). In terms of biological role, catalyzes the methylthiolation of an aspartic acid residue of ribosomal protein uS12. In Helicobacter pylori (strain G27), this protein is Ribosomal protein uS12 methylthiotransferase RimO.